The following is a 179-amino-acid chain: Large ribosomal subunit protein uL6 (179 aa).

This sequence belongs to the universal ribosomal protein uL6 family. Part of the 50S ribosomal subunit.

Functionally, this protein binds to the 23S rRNA, and is important in its secondary structure. It is located near the subunit interface in the base of the L7/L12 stalk, and near the tRNA binding site of the peptidyltransferase center. The sequence is that of Large ribosomal subunit protein uL6 from Prochlorococcus marinus (strain MIT 9312).